Consider the following 153-residue polypeptide: Large ribosomal subunit protein uL30 (153 aa).

This sequence belongs to the universal ribosomal protein uL30 family. As to quaternary structure, part of the 50S ribosomal subunit.

The sequence is that of Large ribosomal subunit protein uL30 from Methanosarcina acetivorans (strain ATCC 35395 / DSM 2834 / JCM 12185 / C2A).